The chain runs to 61 residues: Small ribosomal subunit protein uS14 (61 aa).

4 residues coordinate Zn(2+): C24, C27, C40, and C43.

The protein belongs to the universal ribosomal protein uS14 family. Zinc-binding uS14 subfamily. In terms of assembly, part of the 30S ribosomal subunit. Contacts proteins S3 and S10. Zn(2+) serves as cofactor.

Its function is as follows. Binds 16S rRNA, required for the assembly of 30S particles and may also be responsible for determining the conformation of the 16S rRNA at the A site. The protein is Small ribosomal subunit protein uS14 of Thermodesulfovibrio yellowstonii (strain ATCC 51303 / DSM 11347 / YP87).